The primary structure comprises 98 residues: Large ribosomal subunit protein uL23 (98 aa).

It belongs to the universal ribosomal protein uL23 family. In terms of assembly, part of the 50S ribosomal subunit. Contacts protein L29, and trigger factor when it is bound to the ribosome.

Its function is as follows. One of the early assembly proteins it binds 23S rRNA. One of the proteins that surrounds the polypeptide exit tunnel on the outside of the ribosome. Forms the main docking site for trigger factor binding to the ribosome. The polypeptide is Large ribosomal subunit protein uL23 (Nitrosococcus oceani (strain ATCC 19707 / BCRC 17464 / JCM 30415 / NCIMB 11848 / C-107)).